Here is a 581-residue protein sequence, read N- to C-terminus: Chaperonin GroEL 1 (581 aa).

ATP-binding positions include 29-32, 86-90, Gly-413, and Asp-492; these read TIGP and DGTTT. The segment at 522–543 is disordered; sequence PEPEPAAPGGPSGDPMGGMGGM. Over residues 531–543 the composition is skewed to gly residues; the sequence is GPSGDPMGGMGGM.

This sequence belongs to the chaperonin (HSP60) family. As to quaternary structure, forms a cylinder of 14 subunits composed of two heptameric rings stacked back-to-back. Interacts with the co-chaperonin GroES.

It is found in the cytoplasm. It catalyses the reaction ATP + H2O + a folded polypeptide = ADP + phosphate + an unfolded polypeptide.. Its function is as follows. Together with its co-chaperonin GroES, plays an essential role in assisting protein folding. The GroEL-GroES system forms a nano-cage that allows encapsulation of the non-native substrate proteins and provides a physical environment optimized to promote and accelerate protein folding. In Prochlorococcus marinus (strain MIT 9215), this protein is Chaperonin GroEL 1.